Consider the following 528-residue polypeptide: Xylose import ATP-binding protein XylG (528 aa).

ABC transporter domains are found at residues 6-245 and 262-507; these read LQMN…VGRE and FEAR…LSHP. Position 38–45 (38–45) interacts with ATP; sequence GENGAGKS. The disordered stretch occupies residues 504-528; sequence LSHPGDPDSNDPANNNHNDNDRKTT.

It belongs to the ABC transporter superfamily. Xylose importer (TC 3.A.1.2.4) family. The complex is composed of two ATP-binding proteins (XylG), two transmembrane proteins (XylH) and a solute-binding protein (XylF).

The protein localises to the cell inner membrane. The enzyme catalyses D-xylose(out) + ATP + H2O = D-xylose(in) + ADP + phosphate + H(+). Part of the ABC transporter complex XylFGH involved in xylose import. Responsible for energy coupling to the transport system. This chain is Xylose import ATP-binding protein XylG, found in Pseudomonas syringae pv. tomato (strain ATCC BAA-871 / DC3000).